The following is a 369-amino-acid chain: MVNTSFETLPRHMQMEILSRVPLKFLMKFMCVSKKWASIIRGEEFREDYLFQSMKRPRVLFVIDHREYLPIKPEAFFHSVYQEDQPLLLSGKQRMRTFETPLVQVFQPIRGLICQQGYGKIVICNPGLKKFRSLPQIKVHKGAPMRTFFGYDEDKDVFKVLCITWLRNGKRSEVSKEYLVYTMGSDEESSSWRLITCEHDHAPVTEGLFKGGVLYYGAKSNNGKSVVMSFNVNSEDFSVIELEVEISPYWRLVNYKGDIALMNNIEDSLYHSREFEMWVRNEVTGNWDRTSIKISHWNGTVDGKTFYFKGTIGTKELAFAPDYWFGEQHFVSYYDTETKNLRRFDIEGMVDQDDFVRTFFDHVDSTWLI.

Residues 3–54 (NTSFETLPRHMQMEILSRVPLKFLMKFMCVSKKWASIIRGEEFREDYLFQSM) form the F-box domain.

This is Putative F-box protein At1g70960 from Arabidopsis thaliana (Mouse-ear cress).